The following is a 334-amino-acid chain: RNA polymerase sigma factor RpoS (334 aa).

The tract at residues P21–Q50 is disordered. A sigma-70 factor domain-1 region spans residues D61–A94. The tract at residues M99–T169 is sigma-70 factor domain-2. The Interaction with polymerase core subunit RpoC signature appears at D123–E126. The segment at E179 to L254 is sigma-70 factor domain-3. The segment at W267–E320 is sigma-70 factor domain-4. Positions L293–V312 form a DNA-binding region, H-T-H motif.

This sequence belongs to the sigma-70 factor family. RpoS subfamily. As to quaternary structure, interacts with the RNA polymerase core enzyme.

It is found in the cytoplasm. In terms of biological role, sigma factors are initiation factors that promote the attachment of RNA polymerase to specific initiation sites and are then released. This sigma factor is the master transcriptional regulator of the stationary phase and the general stress response. The polypeptide is RNA polymerase sigma factor RpoS (Pseudomonas aeruginosa (strain ATCC 15692 / DSM 22644 / CIP 104116 / JCM 14847 / LMG 12228 / 1C / PRS 101 / PAO1)).